A 285-amino-acid polypeptide reads, in one-letter code: Pantothenate synthetase (285 aa).

ATP is bound at residue 30–37 (MGNLHDGH). Histidine 37 serves as the catalytic Proton donor. A (R)-pantoate-binding site is contributed by glutamine 61. Glutamine 61 contributes to the beta-alanine binding site. 148–151 (GEKD) lines the ATP pocket. Position 154 (glutamine 154) interacts with (R)-pantoate. 185-188 (RSSR) is an ATP binding site.

Belongs to the pantothenate synthetase family. In terms of assembly, homodimer.

The protein resides in the cytoplasm. The catalysed reaction is (R)-pantoate + beta-alanine + ATP = (R)-pantothenate + AMP + diphosphate + H(+). It functions in the pathway cofactor biosynthesis; (R)-pantothenate biosynthesis; (R)-pantothenate from (R)-pantoate and beta-alanine: step 1/1. Its function is as follows. Catalyzes the condensation of pantoate with beta-alanine in an ATP-dependent reaction via a pantoyl-adenylate intermediate. The polypeptide is Pantothenate synthetase (Alcanivorax borkumensis (strain ATCC 700651 / DSM 11573 / NCIMB 13689 / SK2)).